The primary structure comprises 225 residues: PKHD-type hydroxylase YbiX (225 aa).

One can recognise a Fe2OG dioxygenase domain in the interval Thr78–Ser177. His96, Asp98, and His158 together coordinate Fe cation. Position 168 (Arg168) interacts with 2-oxoglutarate.

Fe(2+) serves as cofactor. L-ascorbate is required as a cofactor.

This chain is PKHD-type hydroxylase YbiX, found in Shigella boydii serotype 4 (strain Sb227).